The sequence spans 332 residues: Beta-ketoacyl-[acyl-carrier-protein] synthase III (332 aa).

Catalysis depends on residues C116 and H255. The interval 256–260 (QANLR) is ACP-binding. The active site involves N285.

This sequence belongs to the thiolase-like superfamily. FabH family. As to quaternary structure, homodimer.

The protein resides in the cytoplasm. It catalyses the reaction malonyl-[ACP] + acetyl-CoA + H(+) = 3-oxobutanoyl-[ACP] + CO2 + CoA. It participates in lipid metabolism; fatty acid biosynthesis. In terms of biological role, catalyzes the condensation reaction of fatty acid synthesis by the addition to an acyl acceptor of two carbons from malonyl-ACP. Catalyzes the first condensation reaction which initiates fatty acid synthesis and may therefore play a role in governing the total rate of fatty acid production. Possesses both acetoacetyl-ACP synthase and acetyl transacylase activities. Its substrate specificity determines the biosynthesis of branched-chain and/or straight-chain of fatty acids. This chain is Beta-ketoacyl-[acyl-carrier-protein] synthase III, found in Helicobacter hepaticus (strain ATCC 51449 / 3B1).